A 276-amino-acid polypeptide reads, in one-letter code: Octopine-binding periplasmic protein (276 aa).

A signal peptide spans 1-20 (MKLKTILCAALLLVAGQAAA). An intrachain disulfide couples C57 to C64.

This sequence belongs to the bacterial solute-binding protein 3 family.

It is found in the periplasm. Component of the octopine active transport system probably consisting of four subunits: Q, M, P and T. This is Octopine-binding periplasmic protein (occT) from Agrobacterium tumefaciens (strain Ach5).